The sequence spans 308 residues: Porphobilinogen deaminase (308 aa).

C241 is subject to S-(dipyrrolylmethanemethyl)cysteine.

This sequence belongs to the HMBS family. In terms of assembly, monomer. It depends on dipyrromethane as a cofactor.

It catalyses the reaction 4 porphobilinogen + H2O = hydroxymethylbilane + 4 NH4(+). Its pathway is porphyrin-containing compound metabolism; protoporphyrin-IX biosynthesis; coproporphyrinogen-III from 5-aminolevulinate: step 2/4. Functionally, tetrapolymerization of the monopyrrole PBG into the hydroxymethylbilane pre-uroporphyrinogen in several discrete steps. This is Porphobilinogen deaminase from Staphylococcus aureus (strain MRSA252).